A 1561-amino-acid polypeptide reads, in one-letter code: MRQFNISVIGLSGTEKDRGQVGVGKSCLCNRFMRPMADDYFIDHISVLSQSDFSGRIVNNDHFLYWGDVRKTTEEGVEYQFNIIEQTEFMDDSTFQAFKVGKMDPYSKRCTATKVFSAEKLMYICKNQLGIEKEYEQKVMPDGRLSIDGFVVVFDVSPVPNRSVEKQVEFVQNVIATILKNKKPLVLVTTKNDDAYELYVREAEKISQRKDYKSTVQLIETSAHESINIDLAFLLLAQMIDKVKNRVKIISYQESAKSRKELLDTRSEAVTRLIRNQITDYHVLWSQGSKMLSQYREWNEFLNIFGHEAGQKLFRRHMKKLRDDHLNKKLHQYLDKFALALEYLLPDIGALNISDDDAWECARNYLQNHIEFEQYFFECPQASWTELVDMDEAEDEARIPFDVLETSEAETVFRNYLNSVQQDKKKIGWKQQFKMLLEESGFVTPGKQLSEVRVLFMGRECFEALSEHDCQQIYDIHQDDIIEKSKQNFVELLLEHAQYFLQFKNVDNITQEDVRQITDVIQEDSRYKMLDRLDQERRLMLVQHLRFIHCPIRDHCPFFYNCVDSLIEEVLSDKSASNHKTPSGGGWKSSGSGSDRTLNLLIVGSEHLASDLLNDIRICTGSKGEYIYENQTYYLNYRIANGDMEAFKAIDVYSSGLICVYSNQQSFETLKDNLERTLLCNLELEDKFENLPIVLVYQPQDLKENEVEYLRNEGMRLSEMLHCDFIDHTQNHQKYVYDILNIVILSLKLTEMKSYEPYPSNHTDLRILCCIFCGDQYDIENIVQPLVEESTLVKANEHSIIVDVFIGDAKRRVEFILSSYHGTSQYRDELIHGYIYFYSTKRRSSLANLSILAAQNANIPLQIIAVTESGGVNAFFNSDICQFLITEGNAVADRFKGSFMTFSADQYVKFAFYNPFLKTAWDNKYEVENLHVEESITLDSGEGTLENSVNQMPRPPPRHESYMLSNTLGTDGSGSENYEMAPTRSLNSLNEERDISLDEIYDDNEKPKHLHQKWLEDKSDGRRNMNKNLIWNNFSGSTHAYTTGRRHIDSNLNKIRPKGPSQTLKVGEAPSRNCPAMSSSTFTLPTQQPGKLNMKNFQLVSDAVAKMNFTGSGSGSGSGSGSGSTGLGLGLGSGSGCMGDSFLEPVDKDGKRYDHAQLDGEDEDSEELAEYEQIYENEDCTESDSCASSTERRVRQQNAYYKASKKPVAAKKQKKKKVAIPVQTPRVPPFGSYVSPPEIPLHYQRMAVGGSGPEKPEPCVPEFMKSDKSPEYSMVPELAGAGIFGAENLPEYNMNQAKCLKDFEKLEKRRIKEETARQRKLQEKEKEQEKKLKRKLKQNAKGLVESAEAQFGKLMITSEQGEIPIFLNKCVEFIEKEGLDSEGIYRVPGSRAHVDMLFQRFEEDTNTEIDALDIPVNAVATALKDFFSKRLPPLFSKDIIKELEEIAGSRGVGNSKLNVEVKTDRSCRLIALKSLLQKLPPINFAILKYIFQHFVHVSDNSKLNSMDSKNLAICWWPTLIPIDFTDMGHFEQLRPYLEDIVQTMIDQFPYLFCGKDAFVMV.

4 FF domains span residues Y252 to K320, Y365 to S419, K426 to D480, and I482 to F547. The pG1 pseudoGTPase domain maps to S592–L765. In terms of domain architecture, pG2 pseudoGTPase spans R766 to E926. Residues S973, S975, S985, S988, and S996 each carry the phosphoserine modification. The segment at K1054 to C1074 is disordered. Positions A1349–F1552 constitute a Rho-GAP domain.

With respect to regulation, negatively regulated by integrin, bsk and Src/Src64B. GTPase-activating protein (GAP) for RhoA/Rho1 that plays an essential role in the stability of dorsal branches of mushroom body (MB) neurons. The MB neurons are the center for olfactory learning and memory. Acts by converting RhoA/Rho1 to an inactive GDP-bound state, leading to repress the RhoA/Rho1-Drok-MRLC signaling pathway thereby maintaining axon branch stability. This Drosophila melanogaster (Fruit fly) protein is Rho GTPase-activating protein 190 (RhoGAPp190).